The chain runs to 585 residues: Arginine--tRNA ligase (585 aa).

Residues 126–136 (PNIAKEMHVGH) carry the 'HIGH' region motif.

Belongs to the class-I aminoacyl-tRNA synthetase family. Monomer.

It is found in the cytoplasm. The catalysed reaction is tRNA(Arg) + L-arginine + ATP = L-arginyl-tRNA(Arg) + AMP + diphosphate. The chain is Arginine--tRNA ligase from Crocosphaera subtropica (strain ATCC 51142 / BH68) (Cyanothece sp. (strain ATCC 51142)).